A 500-amino-acid polypeptide reads, in one-letter code: Hexokinase-3 (500 aa).

The helical transmembrane segment at Val-4–Val-24 threads the bilayer. Residues Arg-35–Ala-487 enclose the Hexokinase domain. A hexokinase small subdomain region spans residues Ser-90–Val-222. ADP-binding residues include Gly-104, Thr-105, and Asn-106. Residues Thr-188, Lys-189, Asn-223, and Asp-224 each coordinate D-glucose. The interval Asn-223 to Asp-476 is hexokinase large subdomain. Ser-247 is an ADP binding site. D-glucose is bound by residues Asn-250, Glu-278, and Glu-309. Residue Gly-441 coordinates ADP.

It belongs to the hexokinase family. As to expression, expressed in roots, leaves, flowers, immature seeds and seed coat. Expressed in young shoots, tiller buds, endosperm seven days after fertilization, and interconnecting tissues such as pulvini and nodes.

The protein localises to the mitochondrion outer membrane. The enzyme catalyses a D-hexose + ATP = a D-hexose 6-phosphate + ADP + H(+). It carries out the reaction D-fructose + ATP = D-fructose 6-phosphate + ADP + H(+). It catalyses the reaction D-glucose + ATP = D-glucose 6-phosphate + ADP + H(+). The protein operates within carbohydrate metabolism; hexose metabolism. It participates in carbohydrate degradation; glycolysis; D-glyceraldehyde 3-phosphate and glycerone phosphate from D-glucose: step 1/4. In terms of biological role, fructose and glucose phosphorylating enzyme. Involved in the regulation of cell expansion in spikelet hulls, grain size, and gibberellin biosynthesis and homeostasis. The chain is Hexokinase-3 from Oryza sativa subsp. japonica (Rice).